The primary structure comprises 412 residues: MDGRTLGLWLLPPVVGGIIGYFTNDLAIRMLFRPYRPVVIGGWQLPFTPGLIPANQGRLARRIADAILGSLLTPDALHDLARRLLELPRLEAAIAWLVSLLLERLREVRDPRSIEVAADVLRDLAGSALPRWLRAIVRQRQGLDAQIDRWFEQQLLSQKLGPLQAQQLGDWLLEGAFPPDQIRRVMLDFLTDDNIRNLDRIVRDRTRGTDWVIANLFGVQSSLQRLRQFLREQPEAGDAVIAELSQRLALRQQLSQALQTFQLTDLPQTTLTDLRLQLRQGLRQWLDQDGLSLLEGALGGLDWTAAARALLDRLRTAVISDEAIAAFSHEVALILDQRLEHELEDLVAAALPILALEDLIIGRVEATPAADLEAAIQGIVRSELQAIVNIGGVLGVLLGCVQSLINVWSLST.

A run of 2 helical transmembrane segments spans residues 8-28 (LWLL…DLAI) and 390-410 (IGGV…VWSL).

This sequence belongs to the UPF0754 family.

The protein localises to the cell inner membrane. This Synechococcus elongatus (strain ATCC 33912 / PCC 7942 / FACHB-805) (Anacystis nidulans R2) protein is UPF0754 membrane protein Synpcc7942_1098.